We begin with the raw amino-acid sequence, 451 residues long: CBL-interacting protein kinase 10 (451 aa).

Positions 13–267 constitute a Protein kinase domain; that stretch reads YEIGKLLGQG…VSEIMEDPWF (255 aa). Residues 19 to 27 and Lys42 each bind ATP; that span reads LGQGSFAKV. Residue Asp135 is the Proton acceptor of the active site. Positions 153 to 182 are activation loop; it reads DFGLSALAECKRQDGLLHTTCGTPAYVAPE. One can recognise an NAF domain in the interval 304–336; sequence INEGKQEAENLTSLNAFDIISLSSGFDLSAMFE. The PPI stretch occupies residues 341-370; sequence KEESKFTSTNTATTITKKLEDVAKNLRLKF.

The protein belongs to the protein kinase superfamily. CAMK Ser/Thr protein kinase family. SNF1 subfamily. Mn(2+) serves as cofactor.

It catalyses the reaction L-seryl-[protein] + ATP = O-phospho-L-seryl-[protein] + ADP + H(+). The enzyme catalyses L-threonyl-[protein] + ATP = O-phospho-L-threonyl-[protein] + ADP + H(+). Its function is as follows. CIPK serine-threonine protein kinases interact with CBL proteins. Binding of a CBL protein to the regulatory NAF domain of CIPK protein lead to the activation of the kinase in a calcium-dependent manner. The sequence is that of CBL-interacting protein kinase 10 (CIPK10) from Oryza sativa subsp. japonica (Rice).